Consider the following 168-residue polypeptide: Nucleoside deoxyribosyltransferase (168 aa).

The active-site Nucleophile is glutamate 103.

This sequence belongs to the nucleoside deoxyribosyltransferase family.

It carries out the reaction 2-deoxy-D-ribosyl-base(1) + base(2) = 2-deoxy-D-ribosyl-base(2) + base(1).. The protein operates within nucleotide metabolism; nucleotide salvage pathway. Functionally, catalyzes the cleavage of the glycosidic bond of 2'-deoxyribonucleosides and the transfer of the deoxyribosyl moiety to an acceptor purine or pyrimidine base. The chain is Nucleoside deoxyribosyltransferase (ntd) from Limosilactobacillus fermentum (Lactobacillus fermentum).